Here is a 469-residue protein sequence, read N- to C-terminus: MDESVDRVLAGKYPAKAHAKRVAARIRELGYGESGVIYLEGQKTQMIEDNDGSMPFRQRRNFFYLSGCPLPDSYLTYNIEEDHLTLFIPPIDEDSVIWSGLPLSPDEALEMYDVDAVLLTTDVNTSLAHFCSVKKGKKVFALADQVSPHITFLPFQETDFDVLKRAAEESRVVKDTYEIALLRRANEISTKAHVAVIKAARSAANERELEAIFIATCMSYGCREQSYHPIFASGTNAATLHYQNNNEDLVDKTTGEKRLNMLVDAGGEYRTYCADITRVVPLSGKFSAESRQIYDIVLDMQMTSLAMIRAGVMWEDVHSNSHRVAIRGLLKLGILRGTEEELFDKGISVAFFPHGVGHYLGMDTHDTGGNPNYEDENPKFKYLRLRGTLACGAVVTVEPGIYFCRFIIDPYLASPELGKYIDTNVLERYWNVGGVRIEDNVVVTQNGHDNLTAAPKIPEEIEKLVAATQ.

Mn(2+)-binding residues include Asp264, Asp275, Glu398, and Glu438.

It belongs to the peptidase M24B family. Requires Mn(2+) as cofactor.

The catalysed reaction is Release of any N-terminal amino acid, including proline, that is linked to proline, even from a dipeptide or tripeptide.. Its function is as follows. Catalyzes the removal of a penultimate prolyl residue from the N-termini of peptides. This is Probable Xaa-Pro aminopeptidase PEPP (PEPP) from Ajellomyces capsulatus (strain H143) (Darling's disease fungus).